The primary structure comprises 171 residues: Protein TIFY 11d (171 aa).

The Tify domain occupies 65-100; it reads PSAGTAPLTIFYDGRMVVVDDVPVEKAAELMRLAGS. The short motif at 117 to 142 is the Jas element; sequence PIARKASLQRFLQKRKHRITTTSEPY. The Nuclear localization signal signature appears at 119–126; the sequence is ARKASLQR.

This sequence belongs to the TIFY/JAZ family. Interacts with BHLH148 and COI1A. Interacts with COI1A, COI1B and COI2 in a coronatine-dependent manner. Coronatine is an analog of jasmonoyl isoleucine (JA-Ile). In terms of processing, ubiquitinated. Increase in jasmonoyl isoleucine (JA-Ile) levels mediates its degradation via COI1A-mediated proteasome pathway.

Its subcellular location is the nucleus. In terms of biological role, repressor of jasmonate (JA) responses. May act on an initial response of JA-regulated gene expression toward drought tolerance as part of a BHLH148-TIFY11D/JAZ12-COI1A complex. This Oryza sativa subsp. japonica (Rice) protein is Protein TIFY 11d.